Consider the following 554-residue polypeptide: Glutamine--tRNA ligase (554 aa).

Positions 34-44 (PEPNGYLHIGH) match the 'HIGH' region motif. Residues 35–37 (EPN) and 41–47 (HIGHAKS) each bind ATP. L-glutamine is bound by residues D67 and Y212. ATP contacts are provided by residues T231, 261–262 (RL), and 269–271 (MSK). Positions 268-272 (VMSKR) match the 'KMSKS' region motif.

It belongs to the class-I aminoacyl-tRNA synthetase family. Monomer.

The protein resides in the cytoplasm. It carries out the reaction tRNA(Gln) + L-glutamine + ATP = L-glutaminyl-tRNA(Gln) + AMP + diphosphate. The sequence is that of Glutamine--tRNA ligase from Shigella boydii serotype 4 (strain Sb227).